The sequence spans 509 residues: MTSGGHIQLFIEHTRQIATAQGDIQLALQSMQQWREAFATALKQNTFDLTGWSPQTKIANQLKQFNHKLTTHVSNWDTEWHTFSAAQSVAEVFHDRVMLLVFGKFNAGKSSLCNLLAECFRSHEQTVQYFHVQNEQIFYTESHLREGATETTAQLQGVCLGEKLILLDTPGLHSGTQKNAALTQKFIDSADGVLWLSSATSPGQVQELDALGRELKRHKPLFPVITRSDFVEEDEIDGELCTVLCNKNSEQRALQESDVLMRAKEKLHSMQVDVSLLKPPVSVSTQMAREADMNPQAMNEAGFERLFAALLALIEPALRYKQRKPAEVLLHFLQEHIIEGLRFYLQPDLEQIQQDLKQAQDDLRQLHTDLAEAVWRSVLPELPQLLEQHASTQNIDAVVNSLNEWINVAFEQQLAIQLDAYGLNLDSLSKIEKTEKMQYERIAGMVVHDGLYTTLTQQIQQAVKASTSELIDQCQAQLEQSIKHVQTLDETFIDYSAALDQLSQALRIE.

The 118-residue stretch at 108-225 folds into the G domain; that stretch reads GKSSLCNLLA…KRHKPLFPVI (118 aa).

This is an uncharacterized protein from Acinetobacter baylyi (strain ATCC 33305 / BD413 / ADP1).